Reading from the N-terminus, the 145-residue chain is D-aminoacyl-tRNA deacylase (145 aa).

The Gly-cisPro motif, important for rejection of L-amino acids signature appears at 137–138 (GP).

This sequence belongs to the DTD family. As to quaternary structure, homodimer.

It is found in the cytoplasm. It catalyses the reaction glycyl-tRNA(Ala) + H2O = tRNA(Ala) + glycine + H(+). The catalysed reaction is a D-aminoacyl-tRNA + H2O = a tRNA + a D-alpha-amino acid + H(+). Functionally, an aminoacyl-tRNA editing enzyme that deacylates mischarged D-aminoacyl-tRNAs. Also deacylates mischarged glycyl-tRNA(Ala), protecting cells against glycine mischarging by AlaRS. Acts via tRNA-based rather than protein-based catalysis; rejects L-amino acids rather than detecting D-amino acids in the active site. By recycling D-aminoacyl-tRNA to D-amino acids and free tRNA molecules, this enzyme counteracts the toxicity associated with the formation of D-aminoacyl-tRNA entities in vivo and helps enforce protein L-homochirality. The sequence is that of D-aminoacyl-tRNA deacylase from Pseudomonas putida (strain GB-1).